A 242-amino-acid chain; its full sequence is MSSTVISLAHFCDKHGPRIISVTQSAEKGTLGEELLVPDYPTESYCESCLLQFPEESTRSMRCFIEDVPFITTQYSSIRYQLLNSIIKRAFSEETMIYDNMPFIFFDDLRGLNLVIGFKLYDENARGNERRYCFILTVDSRSHDDSMKMLSEHWNFIIGGFDKMIAYIKNIHKSEFLGKNKTVENNLETLNNNAFIGSYLRANKSKFGRNLVSLTDDKFLFVRIHKWNSFLLHTVMNENKLP.

In terms of domain architecture, uDENN FLCN/SMCR8-type spans 48-212 (SCLLQFPEES…NKSKFGRNLV (165 aa)).

In terms of biological role, required for the nitrogen-regulated transport of amino acid permeases GAP1 and PUT4 from the Golgi to the cell surface. The polypeptide is Protein LST7 (LST7) (Saccharomyces cerevisiae (strain ATCC 204508 / S288c) (Baker's yeast)).